A 432-amino-acid polypeptide reads, in one-letter code: 3-phosphoshikimate 1-carboxyvinyltransferase (432 aa).

Residues lysine 23, serine 24, and arginine 28 each contribute to the 3-phosphoshikimate site. Position 23 (lysine 23) interacts with phosphoenolpyruvate. Residues glycine 95 and arginine 123 each contribute to the phosphoenolpyruvate site. Positions 167, 169, 316, and 343 each coordinate 3-phosphoshikimate. Glutamine 169 contributes to the phosphoenolpyruvate binding site. The Proton acceptor role is filled by aspartate 316. Phosphoenolpyruvate is bound by residues arginine 347 and arginine 391.

Belongs to the EPSP synthase family. Monomer.

It localises to the cytoplasm. The enzyme catalyses 3-phosphoshikimate + phosphoenolpyruvate = 5-O-(1-carboxyvinyl)-3-phosphoshikimate + phosphate. It participates in metabolic intermediate biosynthesis; chorismate biosynthesis; chorismate from D-erythrose 4-phosphate and phosphoenolpyruvate: step 6/7. In terms of biological role, catalyzes the transfer of the enolpyruvyl moiety of phosphoenolpyruvate (PEP) to the 5-hydroxyl of shikimate-3-phosphate (S3P) to produce enolpyruvyl shikimate-3-phosphate and inorganic phosphate. The polypeptide is 3-phosphoshikimate 1-carboxyvinyltransferase (Limosilactobacillus fermentum (strain NBRC 3956 / LMG 18251) (Lactobacillus fermentum)).